The following is a 279-amino-acid chain: Shikimate dehydrogenase (NADP(+)) (279 aa).

Residues 20–22 (SRS) and Thr-67 each bind shikimate. Lys-71 acts as the Proton acceptor in catalysis. Asp-83 lines the NADP(+) pocket. Residues Asn-92 and Asp-108 each coordinate shikimate. NADP(+)-binding positions include 134 to 138 (GAGGA) and Leu-223. Tyr-225 serves as a coordination point for shikimate. Residue Gly-246 participates in NADP(+) binding.

The protein belongs to the shikimate dehydrogenase family. In terms of assembly, homodimer.

The enzyme catalyses shikimate + NADP(+) = 3-dehydroshikimate + NADPH + H(+). It functions in the pathway metabolic intermediate biosynthesis; chorismate biosynthesis; chorismate from D-erythrose 4-phosphate and phosphoenolpyruvate: step 4/7. In terms of biological role, involved in the biosynthesis of the chorismate, which leads to the biosynthesis of aromatic amino acids. Catalyzes the reversible NADPH linked reduction of 3-dehydroshikimate (DHSA) to yield shikimate (SA). The polypeptide is Shikimate dehydrogenase (NADP(+)) (Cereibacter sphaeroides (strain KD131 / KCTC 12085) (Rhodobacter sphaeroides)).